Here is a 244-residue protein sequence, read N- to C-terminus: uncharacterized protein (244 aa).

This is an uncharacterized protein from Encephalitozoon cuniculi (strain GB-M1) (Microsporidian parasite).